We begin with the raw amino-acid sequence, 119 residues long: Large ribosomal subunit protein uL18 (119 aa).

This sequence belongs to the universal ribosomal protein uL18 family. In terms of assembly, part of the 50S ribosomal subunit; part of the 5S rRNA/L5/L18/L25 subcomplex. Contacts the 5S and 23S rRNAs.

This is one of the proteins that bind and probably mediate the attachment of the 5S RNA into the large ribosomal subunit, where it forms part of the central protuberance. This is Large ribosomal subunit protein uL18 from Xylella fastidiosa (strain M23).